A 312-amino-acid chain; its full sequence is Olfactory receptor 2L13 (312 aa).

Residues 1–24 (MEKWNHTSNDFILLGLLPPNQTGI) are Extracellular-facing. N-linked (GlcNAc...) asparagine glycosylation is found at Asn-5 and Asn-20. The helical transmembrane segment at 25 to 48 (FLLCLIILIFFLASVGNSAMIHLI) threads the bilayer. Over 49 to 56 (HVDPRLHT) the chain is Cytoplasmic. A helical transmembrane segment spans residues 57–78 (PMYFLLSQLSLMDLMYISTTVP). Residues 79–99 (KMAYNFLSGQKGISFLGCGVQ) lie on the Extracellular side of the membrane. Cys-96 and Cys-188 are oxidised to a cystine. A helical transmembrane segment spans residues 100 to 119 (SFFFLTMACSEGLLLTSMAY). Residues 120–138 (DRYLAICHSLYYPIRMSKM) lie on the Cytoplasmic side of the membrane. Residues 139 to 157 (MCVKMIGGSWTLGSINSLA) form a helical membrane-spanning segment. Residues 158–194 (HTVFALHIPYCRSRAIDHFFCDVPAMLLLACTDTWVY) lie on the Extracellular side of the membrane. Residues 195–218 (EYMVFVSTSLFLLFPFIGITSSCG) form a helical membrane-spanning segment. Residues 219 to 235 (RVLFAVYHMHSKEGRKK) lie on the Cytoplasmic side of the membrane. A helical transmembrane segment spans residues 236-258 (AFTTISTHLTVVIFYYAPFVYTY). Topologically, residues 259-271 (LRPRNLRSPAEDK) are extracellular. A helical transmembrane segment spans residues 272-291 (ILAVFYTILTPMLNPIIYSL). At 292-312 (RNKEVLGAMRRVFGIFSFLKE) the chain is on the cytoplasmic side.

Belongs to the G-protein coupled receptor 1 family.

The protein resides in the cell membrane. Functionally, odorant receptor. The protein is Olfactory receptor 2L13 (OR2L13) of Homo sapiens (Human).